We begin with the raw amino-acid sequence, 391 residues long: Methionine import ATP-binding protein MetN 2 (391 aa).

The ABC transporter domain maps to 44 to 280 (VHVGKVFATP…PRHGATRALL (237 aa)). Position 77-84 (77-84 (GRSGAGKS)) interacts with ATP.

The protein belongs to the ABC transporter superfamily. Methionine importer (TC 3.A.1.24) family. As to quaternary structure, the complex is composed of two ATP-binding proteins (MetN), two transmembrane proteins (MetI) and a solute-binding protein (MetQ).

The protein resides in the cell inner membrane. It carries out the reaction L-methionine(out) + ATP + H2O = L-methionine(in) + ADP + phosphate + H(+). The enzyme catalyses D-methionine(out) + ATP + H2O = D-methionine(in) + ADP + phosphate + H(+). Its function is as follows. Part of the ABC transporter complex MetNIQ involved in methionine import. Responsible for energy coupling to the transport system. The sequence is that of Methionine import ATP-binding protein MetN 2 from Burkholderia ambifaria (strain ATCC BAA-244 / DSM 16087 / CCUG 44356 / LMG 19182 / AMMD) (Burkholderia cepacia (strain AMMD)).